Here is a 356-residue protein sequence, read N- to C-terminus: Cytochrome c oxidase subunit 2 (356 aa).

The N-terminal stretch at 1–23 is a signal peptide; it reads MNKGLCNWRLFSLFGMMALLLAG. Residues 24–259 are cytochrome c oxidase subunit II; that stretch reads CGKPFLSTLQ…QNAKKPVVTD (236 aa). 2 helical membrane-spanning segments follow: residues 45–65 and 93–113; these read LMLLSTSIMVLVIVVVAIIFV and IIWTVIPIILLLILAVPTVLT. Histidine 178, cysteine 219, cysteine 223, and histidine 227 together coordinate Cu cation. A Cytochrome c domain is found at 260-356; it reads PVAKEGEAIF…TKYLMSLKVE (97 aa). Cysteine 273, cysteine 276, histidine 277, and methionine 331 together coordinate heme c.

Belongs to the cytochrome c oxidase subunit 2 family. Cu cation is required as a cofactor. The cofactor is heme c.

Its subcellular location is the cell membrane. It catalyses the reaction 4 Fe(II)-[cytochrome c] + O2 + 8 H(+)(in) = 4 Fe(III)-[cytochrome c] + 2 H2O + 4 H(+)(out). In terms of biological role, subunits I and II form the functional core of the enzyme complex. Electrons originating in cytochrome c are transferred via heme a and Cu(A) to the binuclear center formed by heme a3 and Cu(B). This chain is Cytochrome c oxidase subunit 2 (ctaC), found in Bacillus sp. (strain PS3).